Reading from the N-terminus, the 448-residue chain is MNDLSREDLLQKIRLLELENAKLKESKSAVSTVSDQYEYDAKYPKIDEYFSSDEYKRYGRQMIVPQFGSLISQVKLKKSKVLFIGAGGLGCPALLYLSASGVGEIGIIDDDLVDISNLHRQVLHTTESVGIHKCESAKRYINKLNPHVKVNTYPFRLSNDNAFDIIEKYDLILDCTDTPATRYLINDVSVICGKTIVSGSGLKTDGQLSILNFHGIGPCYRCFYPKPPSPGSVTSCSDGGVVGPAIGLIGITMALEAIKVITDFYTDETFKPFLSMYSGYPQQQIRVFKMRNKQANCAVCGNNPTVLKSTISDNDIDYAEFCGRVNPNVLAPELRISVQEYHNYINSSQGENSILIDVRPKEQYEITKLPNSINIAWDPTFIKADNIDSYLPSNFDKNTNTFVMCRYGNDSQMATKKLIENFGFNEVKDIKGGINKWSKEIDSKIPQY.

ATP-binding positions include Gly-88, Asp-109, 116–120 (SNLHR), Lys-133, and 177–178 (DT). Residues Cys-219 and Cys-222 each coordinate Zn(2+). Cys-236 acts as the Glycyl thioester intermediate; for adenylyltransferase activity in catalysis. Residues Cys-297 and Cys-300 each coordinate Zn(2+). The Rhodanese domain maps to 349 to 446 (QGENSILIDV…WSKEIDSKIP (98 aa)). Cys-405 functions as the Cysteine persulfide intermediate; for sulfurtransferase activity in the catalytic mechanism.

It in the N-terminal section; belongs to the HesA/MoeB/ThiF family. UBA4 subfamily. It depends on Zn(2+) as a cofactor.

Its subcellular location is the cytoplasm. The protein localises to the cytosol. Its pathway is tRNA modification; 5-methoxycarbonylmethyl-2-thiouridine-tRNA biosynthesis. Functionally, plays a central role in 2-thiolation of mcm(5)S(2)U at tRNA wobble positions of cytosolic tRNA(Lys), tRNA(Glu) and tRNA(Gln). Acts by mediating the C-terminal thiocarboxylation of sulfur carrier URM1. Its N-terminus first activates URM1 as acyl-adenylate (-COAMP), then the persulfide sulfur on the catalytic cysteine is transferred to URM1 to form thiocarboxylation (-COSH) of its C-terminus. The reaction probably involves hydrogen sulfide that is generated from the persulfide intermediate and that acts as a nucleophile towards URM1. Subsequently, a transient disulfide bond is formed. Does not use thiosulfate as sulfur donor; NFS1 probably acting as a sulfur donor for thiocarboxylation reactions. Prior mcm(5) tRNA modification by the elongator complex is required for 2-thiolation. May also be involved in protein urmylation. This chain is Adenylyltransferase and sulfurtransferase UBA4, found in Debaryomyces hansenii (strain ATCC 36239 / CBS 767 / BCRC 21394 / JCM 1990 / NBRC 0083 / IGC 2968) (Yeast).